The primary structure comprises 304 residues: MEISTDSNMLVALAVIGVTVLLFLIKALGSQAKKAPLTLLDPNAKYPLPLIEKQEISHDTKKFRFGLPSQEHVLGLPVGQHVYLSAKINGSLVVRAYTPVSSDEVKGHVDLIVKVYYKNVHPKFPEGGKMSQHLDSLKIGETIDFRGPNGLLVYKEKGKFAIRPDKKSEPKLKVAKHVGMLAGGTGITPMLQLIRQITQDPNDNTKCSLIFANQTEDDILLRYELETVAKSHPEQFKLWYTLDRPPQGWKYGAGFVTADMIKEHLPPPSEDVVVLMCGPPPMIQFACQDNLTKLGYPEAGRFAY.

Residues 9-29 traverse the membrane as a helical segment; sequence MLVALAVIGVTVLLFLIKALG. The FAD-binding FR-type domain maps to 43-155; the sequence is NAKYPLPLIE…RGPNGLLVYK (113 aa). FAD is bound by residues 135–150 and 174–209; these read DSLKIGETIDFRGPNG and VAKHVGMLAGGTGITPMLQLIRQITQDPNDNTKCSL.

This sequence belongs to the flavoprotein pyridine nucleotide cytochrome reductase family. It depends on FAD as a cofactor.

The protein resides in the membrane. It catalyses the reaction 2 Fe(III)-[cytochrome b5] + NADH = 2 Fe(II)-[cytochrome b5] + NAD(+) + H(+). Functionally, NADH-cytochrome b5 reductases are involved in desaturation and elongation of fatty acids, cholesterol biosynthesis and drug metabolism. The polypeptide is NADH-cytochrome b5 reductase 2 (cyb5r2) (Xenopus tropicalis (Western clawed frog)).